Consider the following 185-residue polypeptide: Ribosome-recycling factor (185 aa).

It belongs to the RRF family.

It localises to the cytoplasm. Its function is as follows. Responsible for the release of ribosomes from messenger RNA at the termination of protein biosynthesis. May increase the efficiency of translation by recycling ribosomes from one round of translation to another. The sequence is that of Ribosome-recycling factor from Xylella fastidiosa (strain 9a5c).